A 459-amino-acid polypeptide reads, in one-letter code: Glycosyl hydrolase family 109 protein (459 aa).

The segment at residues 1–31 (MHNIHRRNFLKAAGAATAGLVTANIALNAYA) is a signal peptide (tat-type signal). Residues 64–65 (ER), D86, 135–138 (WEWH), 155–156 (EV), and N184 each bind NAD(+). Residues Y213, R232, 244-247 (YPTH), and Y326 each bind substrate. Y244 lines the NAD(+) pocket.

It belongs to the Gfo/Idh/MocA family. Glycosyl hydrolase 109 subfamily. It depends on NAD(+) as a cofactor. Post-translationally, predicted to be exported by the Tat system. The position of the signal peptide cleavage has not been experimentally proven.

Functionally, glycosidase. The chain is Glycosyl hydrolase family 109 protein from Shewanella baltica (strain OS155 / ATCC BAA-1091).